The chain runs to 85 residues: U1-ctenitoxin-Pn1a (85 aa).

The N-terminal stretch at 1–16 (MKVAIVFLSLLVLAFA) is a signal peptide. Residues 17 to 34 (SESIEENREEFPVEESAR) constitute a propeptide that is removed on maturation. 5 disulfides stabilise this stretch: cysteine 35–cysteine 49, cysteine 42–cysteine 55, cysteine 46–cysteine 81, cysteine 48–cysteine 65, and cysteine 57–cysteine 63. Positions 82–85 (QNKI) are excised as a propeptide.

It belongs to the neurotoxin 03 (Tx2) family. 05 subfamily. In terms of tissue distribution, expressed by the venom gland.

It localises to the secreted. Functionally, insecticidal neurotoxin that reversibly inhibits the N-methyl-D-aspartate (NMDA)-subtype of ionotropic glutamate receptor (GRIN) and inhibits inactivation of insect sodium channels (Nav). In vivo, is highly toxic to insects. The chain is U1-ctenitoxin-Pn1a from Phoneutria nigriventer (Brazilian armed spider).